A 562-amino-acid chain; its full sequence is Glutamine--tRNA ligase (562 aa).

A 'HIGH' region motif is present at residues 35–45; that stretch reads PEPNGYLHIGH. ATP contacts are provided by residues 36-38 and 42-48; these read EPN and HIGHAKS. Residues Asp-68 and Tyr-213 each contribute to the L-glutamine site. ATP-binding positions include Thr-232, 262-263, and 270-272; these read RL and LSK. Positions 269-273 match the 'KMSKS' region motif; it reads ILSKR.

It belongs to the class-I aminoacyl-tRNA synthetase family. In terms of assembly, monomer.

It is found in the cytoplasm. The enzyme catalyses tRNA(Gln) + L-glutamine + ATP = L-glutaminyl-tRNA(Gln) + AMP + diphosphate. The chain is Glutamine--tRNA ligase from Buchnera aphidicola subsp. Schizaphis graminum (strain Sg).